Consider the following 198-residue polypeptide: Probable GTP-binding protein EngB (198 aa).

The region spanning 27–198 (DLPEVALAGR…ESWDTILSEL (172 aa)) is the EngB-type G domain. GTP-binding positions include 35-42 (GRSNVGKS), 62-66 (GKTQL), 80-83 (DVPG), 147-150 (TKAD), and 179-181 (FSS). Mg(2+)-binding residues include Ser42 and Thr64.

The protein belongs to the TRAFAC class TrmE-Era-EngA-EngB-Septin-like GTPase superfamily. EngB GTPase family. Mg(2+) is required as a cofactor.

Functionally, necessary for normal cell division and for the maintenance of normal septation. The protein is Probable GTP-binding protein EngB of Streptococcus agalactiae serotype III (strain NEM316).